The primary structure comprises 216 residues: UPF0301 protein Nham_3550 (216 aa).

Basic residues predominate over residues 1–10 (MSAARKRPGT). The segment at 1–25 (MSAARKRPGTGRRQTDDADTGAPDQ) is disordered.

It belongs to the UPF0301 (AlgH) family.

The polypeptide is UPF0301 protein Nham_3550 (Nitrobacter hamburgensis (strain DSM 10229 / NCIMB 13809 / X14)).